We begin with the raw amino-acid sequence, 353 residues long: Protein arginine N-methyltransferase 1 (353 aa).

One can recognise an SAM-dependent MTase PRMT-type domain in the interval 32–353; that stretch reads KDYYFDSYAH…LSCSTDYRMR (322 aa). Residues H45, R54, G78, and E100 each coordinate S-adenosyl-L-methionine. The residue at position 116 (K116) is an N6-succinyllysine. A Glycyl lysine isopeptide (Lys-Gly) (interchain with G-Cter in ubiquitin) cross-link involves residue K127. Position 129 (E129) interacts with S-adenosyl-L-methionine. Residues E144 and E153 contribute to the active site. Residues K210 and K215 each carry the N6-acetyllysine modification. A phosphoserine mark is found at S286 and S289.

Belongs to the class I-like SAM-binding methyltransferase superfamily. Protein arginine N-methyltransferase family. Homodimer and heterodimer with PRMT8. Homooctamer; individual homodimers associates to form a homooctamer. Interacts with NFATC2IP. Interacts with ILF3 and SUPT5H. Individual homodimers can associate to form a homohexamer. Interacts with FOXO1; the interaction methylates FOXO1, retaining it in the nucleus and increasing its transcriptional activity. Methylation of FOXO1 is increased with oxidative stress. Interacts with CHTOP; the interaction methylates CHTOP, enabling its interaction with the 5FMC complex. Interacts with BTG1, BTG2 and IFNAR1. Interacts with and probably methylates ATXN2L. Component of the methylosome, a 20S complex containing at least CLNS1A/pICln, PRMT5/SKB1, WDR77/MEP50, PRMT1 and ERH. Interacts with DHX9 (via RGG region). Interacts (via N-terminus) with HABP4. Interacts with MAP3K5/ASK1; the interaction results in MAP3K5 methylation by PRMT1 which inhibits MAP3K5 activation. Interacts with TRIM48; the interaction results in ubiquitination of PRMT1 by TRIM48, leading to PRMT1 proteasomal degradation and activation of MAP3K5. Interacts with GATOR1 complex; this interaction is S-adenosyl-L-methionine (SAM) dependent and is perturbated by SAMTOR in a SAM-sensitive manner. Interacts with GFI1; promoting recognition and binding of MRE11 and TP53BP1 substrates by PRMT1. Polyubiquitinated at Lys-127 by the SCF(FBXL17) complex, leading to its subsequent degradation. Ubiquitination is regulated by acetylation at Lys-210 and Lys-215. Polyubiquitinated by E3 ubiquitin-protein ligase TRIM48, leading to suppression of MAP3K5/ASK1 methylation and subsequent MAP3K5 activation. Post-translationally, acetylation at Lys-210 and Lys-215 regulates ubiquitination by the SCF(FBXL17) complex. Acetylated at Lys-215 by p300/EP300. Deacetylated at Lys-210 and Lys-215 by SIRT1. In terms of tissue distribution, ubiquitous.

The protein localises to the nucleus. Its subcellular location is the nucleoplasm. It localises to the cytoplasm. It is found in the cytosol. The protein resides in the lysosome membrane. The catalysed reaction is L-arginyl-[protein] + 2 S-adenosyl-L-methionine = N(omega),N(omega)-dimethyl-L-arginyl-[protein] + 2 S-adenosyl-L-homocysteine + 2 H(+). It catalyses the reaction L-arginyl-[protein] + S-adenosyl-L-methionine = N(omega)-methyl-L-arginyl-[protein] + S-adenosyl-L-homocysteine + H(+). The enzyme catalyses N(omega)-methyl-L-arginyl-[protein] + S-adenosyl-L-methionine = N(omega),N(omega)-dimethyl-L-arginyl-[protein] + S-adenosyl-L-homocysteine + H(+). Arginine methyltransferase that methylates (mono and asymmetric dimethylation) the guanidino nitrogens of arginyl residues present in proteins such as ESR1, histone H2, H3 and H4, FMR1, ILF3, HNRNPA1, HNRNPD, NFATC2IP, SUPT5H, TAF15, EWS, HABP4, SERBP1, RBM15, FOXO1, CHTOP, MAP3K5/ASK1 and MICU1. Constitutes the main enzyme that mediates monomethylation and asymmetric dimethylation of histone H4 'Arg-3' (H4R3me1 and H4R3me2a, respectively), a specific tag for epigenetic transcriptional activation. May be involved in the regulation of TAF15 transcriptional activity, act as an activator of estrogen receptor (ER)-mediated transactivation, play a key role in neurite outgrowth and act as a negative regulator of megakaryocytic differentiation, by modulating p38 MAPK pathway. Methylates RBM15, promoting ubiquitination and degradation of RBM15. Methylates MRE11 and TP53BP1, promoting the DNA damage response. Methylates FOXO1 and retains it in the nucleus increasing its transcriptional activity. Methylates CHTOP and this methylation is critical for its 5-hydroxymethylcytosine (5hmC)-binding activity. Methylates MAP3K5/ASK1 at 'Arg-85' and 'Arg-87' which promotes association of MAP3K5 with thioredoxin and negatively regulates MAP3K5 association with TRAF2, inhibiting MAP3K5 stimulation and MAP3K5-induced activation of JNK. Methylates H4R3 in genes involved in glioblastomagenesis in a CHTOP- and/or TET1-dependent manner. Plays a role in regulating alternative splicing in the heart. Methylates NPRL2 at 'Arg-78' leading to inhibition of its GTPase activator activity and then the GATOR1 complex and consequently inducing timely mTORC1 activation under methionine-sufficient conditions. This Rattus norvegicus (Rat) protein is Protein arginine N-methyltransferase 1.